The chain runs to 541 residues: MAFEELLSQVGGLGRFQMLHLVFILPSLMLLIPHILLENFAAAIPGHRCWVHMLDNNTGSGNETGILSEDALLRISIPLDSNLRPEKCRRFVHPQWQLLHLNGTIHSTSEADTEPCVDGWVYDQSYFPSTIVTKWDLVCDYQSLKSVVQFLLLTGMLVGGIIGGHVSDRFGRRFILRWCLLQLAITDTCAAFAPTFPVYCVLRFLAGFSSMIIISNNSLPITEWIRPNSKALVVILSSGALSIGQIILGGLAYVFRDWQTLHVVASVPFFVFFLLSRWLVESARWLIITNKLDEGLKALRKVARTNGIKNAEETLNIEVVRSTMQEELDAAQTKTTVCDLFRNPSMRKRICILVFLRFANTIPFYGTMVNLQHVGSNIFLLQVLYGAVALIVRCLALLTLNHMGRRISQILFMFLVGLSILANTFVPKEMQTLRVALACLGIGCSAATFSSVAVHFIELIPTVLRARASGIDLTASRIGAALAPLLMTLTVFFTTLPWIIYGIFPIIGGLIVFLLPETKNLPLPDTIKDVENQKKNLKEKA.

The Cytoplasmic segment spans residues methionine 1–arginine 15. The helical transmembrane segment at phenylalanine 16 to leucine 36 threads the bilayer. At leucine 37–lysine 145 the chain is on the extracellular side. 2 N-linked (GlcNAc...) asparagine glycosylation sites follow: asparagine 56 and asparagine 102. Residues serine 146–valine 166 form a helical membrane-spanning segment. Residues serine 167–alanine 193 lie on the Cytoplasmic side of the membrane. Residues proline 194 to isoleucine 214 form a helical membrane-spanning segment. Residues serine 215–lysine 230 are Extracellular-facing. The chain crosses the membrane as a helical span at residues alanine 231–leucine 251. Residues alanine 252–glutamine 259 are Cytoplasmic-facing. A helical membrane pass occupies residues threonine 260–valine 280. Residues glutamate 281–arginine 349 are Extracellular-facing. Residues isoleucine 350–asparagine 370 form a helical membrane-spanning segment. Residues leucine 371–asparagine 377 lie on the Cytoplasmic side of the membrane. The chain crosses the membrane as a helical span at residues isoleucine 378–leucine 398. Topologically, residues threonine 399–arginine 406 are extracellular. The chain crosses the membrane as a helical span at residues isoleucine 407 to proline 427. Topologically, residues lysine 428 to alanine 436 are cytoplasmic. A helical transmembrane segment spans residues leucine 437–isoleucine 457. The Extracellular segment spans residues glutamate 458–aspartate 472. A helical transmembrane segment spans residues leucine 473–phenylalanine 493. Over threonine 494–threonine 495 the chain is Cytoplasmic. Residues leucine 496–proline 516 form a helical membrane-spanning segment. Topologically, residues glutamate 517–alanine 541 are extracellular.

Belongs to the major facilitator (TC 2.A.1) superfamily. Organic cation transporter (TC 2.A.1.19) family. As to expression, detected in fetal and adult liver, and in adult kidney.

The protein localises to the membrane. This Homo sapiens (Human) protein is Solute carrier family 22 member 10 (SLC22A10).